Reading from the N-terminus, the 752-residue chain is Iron-sulfur clusters transporter ABCB7, mitochondrial (752 aa).

The transit peptide at 1–22 directs the protein to the mitochondrion; it reads MALLAIHSWRWAAAAVAFEKHK. The Mitochondrial matrix segment spans residues 23 to 140; it reads HSAVLTRSLV…KDRPDLRARV (118 aa). The ABC transmembrane type-1 domain occupies 140-436; sequence VAISLGFLGG…LGTVYRETRQ (297 aa). A helical membrane pass occupies residues 141-161; it reads AISLGFLGGAKAMNIVVPFMF. At 162-185 the chain is on the mitochondrial intermembrane side; that stretch reads KYAVDSLNQMSGNMLNLSDAPNTV. Residues 186 to 206 form a helical membrane-spanning segment; sequence ATMATAVLIGYGVSRAGAAFF. At 207 to 259 the chain is on the mitochondrial matrix side; it reads NEVRNAVFGKVAQNSIRRIAKNVFLHLHNLDLGFHLSRQTGALSKAIDRGTRG. 2 positions are modified to N6-acetyllysine: Lys-216 and Lys-251. Residues 260–280 traverse the membrane as a helical segment; that stretch reads ISFVLSALVFNLLPIVFEMTL. The Mitochondrial intermembrane segment spans residues 281-290; that stretch reads VSSVLYYKCG. Residues 291–311 form a helical membrane-spanning segment; sequence AQFALVTLGTLGAYTAFTVAV. The Mitochondrial matrix portion of the chain corresponds to 312–382; it reads TRWRTRFRIE…TLAMLNFGQS (71 aa). 315–319 serves as a coordination point for glutathione; it reads RTRFR. Ser-336 carries the phosphoserine modification. Tyr-340 is modified (phosphotyrosine). Thr-342 carries the post-translational modification Phosphothreonine. Residue Lys-350 is modified to N6-acetyllysine. 378–381 provides a ligand contact to glutathione; it reads NFGQ. Residues 383–403 traverse the membrane as a helical segment; that stretch reads AIFSVGLTAIMVLASQGIVAG. Residues 404–409 lie on the Mitochondrial intermembrane side of the membrane; that stretch reads ALTVGD. The helical transmembrane segment at 410-430 threads the bilayer; that stretch reads LVMVNGLLFQLSLPLNFLGTV. A glutathione-binding site is contributed by Gly-428. Residues 431–752 are Mitochondrial matrix-facing; it reads YRETRQALID…SVKGCGNCSC (322 aa). The ABC transporter domain occupies 472-706; sequence VAFDNVHFEY…SSSIYSEMWH (235 aa). Residues Tyr-481 and 505–516 each bind ATP; that span reads GGSGSGKSTIVR.

This sequence belongs to the ABC transporter superfamily. ABCB family. Heavy Metal importer (TC 3.A.1.210) subfamily. As to quaternary structure, homodimer or heterodimer. Interacts with C10orf88/PAAT. Forms a complex with ABCB10 and FECH, where a dimeric FECH bridges ABCB7 and ABCB10 homodimers; this complex may be required for cellular iron homeostasis, mitochondrial function and heme biosynthesis. Interacts with FECH. Interacts with ATP5F1A. Interacts with COX4I1; this interaction allows the regulation of cellular iron homeostasis and cellular reactive oxygen species (ROS) levels in cardiomyocytes.

It localises to the mitochondrion inner membrane. The enzyme catalyses (glutathione)4[2Fe(III)-2S] cluster(in) + ATP + H2O = (glutathione)4[2Fe(III)-2S] cluster(out) + ADP + phosphate + H(+). Exports glutathione-coordinated iron-sulfur clusters such as [2Fe-2S]-(GS)4 cluster from the mitochondria to the cytosol in an ATP-dependent manner allowing the assembly of the cytosolic iron-sulfur (Fe/S) cluster-containing proteins and participates in iron homeostasis. Moreover, through a functional complex formed of ABCB7, FECH and ABCB10, also plays a role in the cellular iron homeostasis, mitochondrial function and heme biosynthesis. In cardiomyocytes, regulates cellular iron homeostasis and cellular reactive oxygen species (ROS) levels through its interaction with COX4I1. May also play a role in hematopoiesis. In Rattus norvegicus (Rat), this protein is Iron-sulfur clusters transporter ABCB7, mitochondrial.